The following is a 442-amino-acid chain: Gamma-glutamyl phosphate reductase (442 aa).

Belongs to the gamma-glutamyl phosphate reductase family.

Its subcellular location is the cytoplasm. The enzyme catalyses L-glutamate 5-semialdehyde + phosphate + NADP(+) = L-glutamyl 5-phosphate + NADPH + H(+). It functions in the pathway amino-acid biosynthesis; L-proline biosynthesis; L-glutamate 5-semialdehyde from L-glutamate: step 2/2. Functionally, catalyzes the NADPH-dependent reduction of L-glutamate 5-phosphate into L-glutamate 5-semialdehyde and phosphate. The product spontaneously undergoes cyclization to form 1-pyrroline-5-carboxylate. This Campylobacter curvus (strain 525.92) protein is Gamma-glutamyl phosphate reductase.